The sequence spans 94 residues: Integration host factor subunit beta (94 aa).

The protein belongs to the bacterial histone-like protein family. In terms of assembly, heterodimer of an alpha and a beta chain.

This protein is one of the two subunits of integration host factor, a specific DNA-binding protein that functions in genetic recombination as well as in transcriptional and translational control. The protein is Integration host factor subunit beta of Xanthobacter autotrophicus (strain ATCC BAA-1158 / Py2).